The sequence spans 290 residues: Festuclavine dehydrogenase easG (290 aa).

Belongs to the fgaFS/easG family.

It carries out the reaction festuclavine + NAD(+) = 6,8-dimethyl-6,7-didehydroergoline + NADH + H(+). Its pathway is alkaloid biosynthesis; ergot alkaloid biosynthesis. Functionally, festuclavine dehydrogenase; part of the gene cluster that mediates the biosynthesis of fumiclavanine C, a fungal ergot alkaloid. DmaW catalyzes the first step of ergot alkaloid biosynthesis by condensing dimethylallyl diphosphate (DMAP) and tryptophan to form 4-dimethylallyl-L-tryptophan. The second step is catalyzed by the methyltransferase easF that methylates 4-dimethylallyl-L-tryptophan in the presence of S-adenosyl-L-methionine, resulting in the formation of 4-dimethylallyl-L-abrine. The catalase easC and the FAD-dependent oxidoreductase easE then transform 4-dimethylallyl-L-abrine to chanoclavine-I which is further oxidized by EasD in the presence of NAD(+), resulting in the formation of chanoclavine-I aldehyde. EasA reduces chanoclavine-I aldehyde to dihydrochanoclavine-I aldehyde that spontaneously dehydrates to form 6,8-dimethyl-6,7-didehydroergoline. EasG then catalyzes the reduction of 6,8-dimethyl-6,7-didehydroergoline to form festuclavine. Hydrolysis of festuclavine by easM then leads to the formation of fumigaclavine B which is in turn acetylated by easN to fumigaclavine A. Finally, easL catalyzes the conversion of fumigaclavine A into fumigaclavine C by attaching a dimethylallyl moiety to C-2 of the indole nucleus. The polypeptide is Festuclavine dehydrogenase easG (Aspergillus fumigatus (strain ATCC MYA-4609 / CBS 101355 / FGSC A1100 / Af293) (Neosartorya fumigata)).